The following is a 396-amino-acid chain: Flavohemoprotein (396 aa).

The 136-residue stretch at methionine 1 to alanine 136 folds into the Globin domain. Histidine 85 is a binding site for heme b. Active-site charge relay system residues include tyrosine 95 and glutamate 135. The reductase stretch occupies residues glycine 147–leucine 396. Residues glutamate 150–alanine 255 form the FAD-binding FR-type domain. FAD is bound by residues tyrosine 188 and arginine 204–serine 207. Glycine 268 to proline 273 is an NADP(+) binding site. Cysteine 389 to proline 392 lines the FAD pocket.

Belongs to the globin family. Two-domain flavohemoproteins subfamily. It in the C-terminal section; belongs to the flavoprotein pyridine nucleotide cytochrome reductase family. As to quaternary structure, monomer. The cofactor is FAD. It depends on heme b as a cofactor.

Its subcellular location is the cytoplasm. It carries out the reaction 2 nitric oxide + NADPH + 2 O2 = 2 nitrate + NADP(+) + H(+). The catalysed reaction is 2 nitric oxide + NADH + 2 O2 = 2 nitrate + NAD(+) + H(+). Is involved in NO detoxification in an aerobic process, termed nitric oxide dioxygenase (NOD) reaction that utilizes O(2) and NAD(P)H to convert NO to nitrate, which protects the bacterium from various noxious nitrogen compounds. Therefore, plays a central role in the inducible response to nitrosative stress. In terms of biological role, in the presence of oxygen and NADH, HMP has NADH oxidase activity, which leads to the generation of superoxide and H(2)O(2), both in vitro and in vivo, and it has been suggested that HMP might act as an amplifier of superoxide stress. Under anaerobic conditions, HMP also exhibits nitric oxide reductase and FAD reductase activities. However, all these reactions are much lower than NOD activity. Functionally, various electron acceptors are also reduced by HMP in vitro, including dihydropterine, ferrisiderophores, ferric citrate, cytochrome c, nitrite, S-nitrosoglutathione, and alkylhydroperoxides. However, it is unknown if these reactions are of any biological significance in vivo. The sequence is that of Flavohemoprotein (hmp) from Escherichia coli (strain K12).